We begin with the raw amino-acid sequence, 397 residues long: MNFNKKTIEDVQVKGKKVLVRCDFNVPLKDGVITDENRLNGAMPTIKYLVDNGAKVILCSHMGKPKGEAKPEFSLAPVAKRLSEMLGKEVVFAADDNVVGENAKKAVAEMKDGDVVLLQNTRYRKEETKNGEELSKELASLAEMFVNDAFGTAHRAHCSTVGVTEYLKPAVCGYLIQKELKFLGDAVETPERPFVAILGGAKVSDKINVINNLLEKVDTLIIGGGMAYTFLKAQGYTVGSSLVEEDKVEYAKEMLAKAEEKGVKLLLPVDHRVAKEFKDVEAVVTEDQNIAEGFMGLDIGPKTEAIYAEAIKDAKTVIWNGPMGVFEFENFNKGTIAVAKAMAEADATTIIGGGDSAAAVNILGFGDKMSHISTGGGASLEFLEGKVLPGIAALNDK.

Substrate-binding positions include 23-25 (DFN), Arg38, 61-64 (HMGK), Arg122, and Arg155. ATP-binding positions include Lys206, Gly296, Glu327, and 353 to 356 (GGDS).

The protein belongs to the phosphoglycerate kinase family. In terms of assembly, monomer.

The protein resides in the cytoplasm. The enzyme catalyses (2R)-3-phosphoglycerate + ATP = (2R)-3-phospho-glyceroyl phosphate + ADP. It functions in the pathway carbohydrate degradation; glycolysis; pyruvate from D-glyceraldehyde 3-phosphate: step 2/5. This is Phosphoglycerate kinase from Clostridium perfringens (strain ATCC 13124 / DSM 756 / JCM 1290 / NCIMB 6125 / NCTC 8237 / Type A).